Here is a 293-residue protein sequence, read N- to C-terminus: 4-diphosphocytidyl-2-C-methyl-D-erythritol kinase (293 aa).

Residue lysine 16 is part of the active site. 99–109 (PMGAGLGGGSS) is an ATP binding site. The active site involves aspartate 141.

It belongs to the GHMP kinase family. IspE subfamily.

It carries out the reaction 4-CDP-2-C-methyl-D-erythritol + ATP = 4-CDP-2-C-methyl-D-erythritol 2-phosphate + ADP + H(+). Its pathway is isoprenoid biosynthesis; isopentenyl diphosphate biosynthesis via DXP pathway; isopentenyl diphosphate from 1-deoxy-D-xylulose 5-phosphate: step 3/6. In terms of biological role, catalyzes the phosphorylation of the position 2 hydroxy group of 4-diphosphocytidyl-2C-methyl-D-erythritol. This is 4-diphosphocytidyl-2-C-methyl-D-erythritol kinase from Burkholderia cenocepacia (strain ATCC BAA-245 / DSM 16553 / LMG 16656 / NCTC 13227 / J2315 / CF5610) (Burkholderia cepacia (strain J2315)).